A 283-amino-acid chain; its full sequence is Shikimate kinase (283 aa).

86 to 96 (PIKSGLSSSSA) contributes to the ATP binding site.

The protein belongs to the GHMP kinase family. Archaeal shikimate kinase subfamily.

It is found in the cytoplasm. The catalysed reaction is shikimate + ATP = 3-phosphoshikimate + ADP + H(+). Its pathway is metabolic intermediate biosynthesis; chorismate biosynthesis; chorismate from D-erythrose 4-phosphate and phosphoenolpyruvate: step 5/7. The sequence is that of Shikimate kinase from Methanococcus maripaludis (strain C5 / ATCC BAA-1333).